An 89-amino-acid chain; its full sequence is Large ribosomal subunit protein bL27 (89 aa).

Residues 1-21 (MAHKKAGGSSRNGRDSKGKRL) are disordered.

Belongs to the bacterial ribosomal protein bL27 family.

The polypeptide is Large ribosomal subunit protein bL27 (Bradyrhizobium diazoefficiens (strain JCM 10833 / BCRC 13528 / IAM 13628 / NBRC 14792 / USDA 110)).